Reading from the N-terminus, the 758-residue chain is Probable adenosylcobalamin-dependent ribonucleoside-triphosphate reductase (758 aa).

A disulfide bridge connects residues C194 and C459. A disordered region spans residues 233–256 (IIIKGQLPPPPPQQQPQQQQQQHG). Active-site residues include C448 and E450.

It belongs to the class II ribonucleoside-triphosphate reductase family. In terms of assembly, monomer. Adenosylcob(III)alamin is required as a cofactor.

The catalysed reaction is a 2'-deoxyribonucleoside 5'-triphosphate + [thioredoxin]-disulfide + H2O = a ribonucleoside 5'-triphosphate + [thioredoxin]-dithiol. This chain is Probable adenosylcobalamin-dependent ribonucleoside-triphosphate reductase (rtpR), found in Dictyostelium discoideum (Social amoeba).